Here is a 446-residue protein sequence, read N- to C-terminus: MTNYYGHNIVIIGLGITGITCVNFFRSRGITPRVMDTRYNPPQLNQLPKDIQYWLGELKIEWLLAATLIVISPGISLSHPAINTAMKCGIEIIGDVELFLREVTVPVVAITGTNGKSTVAKLVGTMANCAGLKVGVGGNIGYPVLSLLQQSHQLYVLELSSFQLETTKNLKVAVATILNISEDHMDRYPLGLQQYREAKLKIYKQAKIYIINDDDKLTLPANSTNKEYCSIIKFGIKSGHYCLGDYQGKQWLMAYGKPLLDCNEIKIIGRHNLLNALAALALAEAIAIPRQACLIALRQFSGLMHRFELVLERKGIRWINDSKATNVGSTKAALNELTVDGTLHLLLGGDGKLADFSSLQPFVQGNNIHLYCFGKDSKKLAALNQHSATITQTLSQAMHIINNQVKAGDVVLLSPACSSLDQFENFKVRGKTFTNLVFEFNDGNNN.

112–118 is a binding site for ATP; it reads GTNGKST.

The protein belongs to the MurCDEF family.

It is found in the cytoplasm. It catalyses the reaction UDP-N-acetyl-alpha-D-muramoyl-L-alanine + D-glutamate + ATP = UDP-N-acetyl-alpha-D-muramoyl-L-alanyl-D-glutamate + ADP + phosphate + H(+). It participates in cell wall biogenesis; peptidoglycan biosynthesis. Functionally, cell wall formation. Catalyzes the addition of glutamate to the nucleotide precursor UDP-N-acetylmuramoyl-L-alanine (UMA). The sequence is that of UDP-N-acetylmuramoylalanine--D-glutamate ligase from Baumannia cicadellinicola subsp. Homalodisca coagulata.